Reading from the N-terminus, the 67-residue chain is Probable Sec-independent protein translocase protein TatE (67 aa).

Residues M1–G21 form a helical membrane-spanning segment. Positions K44–D67 are disordered.

The protein belongs to the TatA/E family. TatE subfamily.

Its subcellular location is the cell inner membrane. In terms of biological role, part of the twin-arginine translocation (Tat) system that transports large folded proteins containing a characteristic twin-arginine motif in their signal peptide across membranes. TatE shares overlapping functions with TatA. This chain is Probable Sec-independent protein translocase protein TatE, found in Pantoea ananatis (strain LMG 20103).